A 105-amino-acid chain; its full sequence is UPF0145 protein AHA_2580 (105 aa).

It belongs to the UPF0145 family.

In Aeromonas hydrophila subsp. hydrophila (strain ATCC 7966 / DSM 30187 / BCRC 13018 / CCUG 14551 / JCM 1027 / KCTC 2358 / NCIMB 9240 / NCTC 8049), this protein is UPF0145 protein AHA_2580.